A 1031-amino-acid polypeptide reads, in one-letter code: LRR receptor-like serine/threonine-protein kinase EFR (1031 aa).

The first 24 residues, 1-24, serve as a signal peptide directing secretion; that stretch reads MKLSFSLVFNALTLLLQVCIFAQA. Residues 25–653 are Extracellular-facing; that stretch reads RFSNETDMQA…LSVRKKVVSG (629 aa). Residues Asn-28, Asn-55, and Asn-95 are each glycosylated (N-linked (GlcNAc...) asparagine). LRR repeat units lie at residues 98–120, 122–144, 146–168, 170–193, 194–216, 218–240, 242–264, 267–289, 291–312, and 315–335; these read FLRL…VGRL, RLQY…LSNC, RLST…LGSL, KLAI…GNLT, SLQK…VARL, QMVF…LYNI, SLES…FGYL, NLRR…LANI, SLER…SFGK, and NLWW…SGLE. Asn-127 and Asn-143 each carry an N-linked (GlcNAc...) asparagine glycan. Residues Asn-180 and Asn-191 are each glycosylated (N-linked (GlcNAc...) asparagine). Asn-239 is a glycosylation site (N-linked (GlcNAc...) asparagine). Residue Asn-288 is glycosylated (N-linked (GlcNAc...) asparagine). N-linked (GlcNAc...) asparagine glycosylation is found at Asn-323, Asn-329, Asn-342, and Asn-366. LRR repeat units lie at residues 345-368, 370-392, 394-416, 418-440, 442-464, 466-487, 490-512, 514-536, 538-560, 561-584, and 585-597; these read QLEY…ANLS, TLTS…IGNL, SLQE…FGKL, NLQV…FGNM, RLQK…LGRC, YLLD…EILQ, SLAY…VGKL, LLVG…IGGC, SMEF…SRLV, SLKN…ASLP, and SLRN…NKFE. An N-linked (GlcNAc...) asparagine glycan is attached at Asn-439. Asn-478 carries an N-linked (GlcNAc...) asparagine glycan. N-linked (GlcNAc...) asparagine glycosylation is found at Asn-571, Asn-590, and Asn-608. Residues 654–674 traverse the membrane as a helical segment; sequence ICIGIASLLLIIIVASLCWFM. At 675-1031 the chain is on the cytoplasmic side; it reads KRKKKNNASD…WMLNTDMHTM (357 aa). A Phosphothreonine modification is found at Thr-709. The Protein kinase domain occupies 712–1001; the sequence is FSSTNLIGSG…ELISIRSKFF (290 aa). ATP contacts are provided by residues 718–726 and Lys-741; that span reads IGSGNFGNV. Phosphotyrosine is present on residues Tyr-791 and Tyr-836. Residue Asp-849 is the Proton acceptor of the active site. Residue Tyr-897 is modified to Phosphotyrosine. A compositionally biased stretch (polar residues) spans 1005 to 1020; sequence TTITESPRDAPQSSPQ. The interval 1005-1031 is disordered; sequence TTITESPRDAPQSSPQEWMLNTDMHTM.

This sequence belongs to the protein kinase superfamily. Ser/Thr protein kinase family. As to quaternary structure, binds to Pseudomonas syringae AvrPto1 and (via the kinase and cytoplasmic domains) to hopD2. Interacts with SERK3/BAK1, SERK4/BKK1, SERK1 and SERK2 in a specific ligand-induced manner. Binds to IOS1. Binds to BIK1 in the absence of pathogen elicitor; dissociates upon pathogen-associated molecular pattern (PAMP)-triggered activation. Post-translationally, autophosphorylated after elicitation with elfl18. Autophosphorylation is inhibited by the binding with avrPto1. Phosphorylation at T-836 is required for immune signaling. Polyubiquitinated at the kinase domain mediated by P.syringae AvrPtoB.

It localises to the cell membrane. The protein localises to the endomembrane system. The catalysed reaction is L-seryl-[protein] + ATP = O-phospho-L-seryl-[protein] + ADP + H(+). It catalyses the reaction L-threonyl-[protein] + ATP = O-phospho-L-threonyl-[protein] + ADP + H(+). Constitutes the pattern-recognition receptor (PPR) that determines the specific perception of elongation factor Tu (EF-Tu), a potent elicitor of the defense response to pathogen-associated molecular patterns (PAMPs); phosphorylates BIK1 upon elicitation to regulate immune responses such as defense hormone expression (e.g. jasmonic acid (JA) and salicylic acid (SA)). Reduces transformation by Rhizobium radiobacter probably by inducing plant defense during the interaction. Binding to the effector AvrPto1 from P.syringae blocks the downstream plant immune response while interaction with hopD2 decreases the phosphorylation level of EFR upon elf18 treatment. Specific endoplasmic reticulum quality control components (ERD2B, CRT3, UGGT and STT3A) are required for the biogenesis of EFR. This Arabidopsis thaliana (Mouse-ear cress) protein is LRR receptor-like serine/threonine-protein kinase EFR.